We begin with the raw amino-acid sequence, 806 residues long: Lon protease (806 aa).

In terms of domain architecture, Lon N-terminal spans L13–I206. Position 356 to 363 (G356 to T363) interacts with ATP. Residues K599–R780 form the Lon proteolytic domain. Residues S686 and K729 contribute to the active site.

This sequence belongs to the peptidase S16 family. As to quaternary structure, homohexamer. Organized in a ring with a central cavity.

Its subcellular location is the cytoplasm. It carries out the reaction Hydrolysis of proteins in presence of ATP.. ATP-dependent serine protease that mediates the selective degradation of mutant and abnormal proteins as well as certain short-lived regulatory proteins. Required for cellular homeostasis and for survival from DNA damage and developmental changes induced by stress. Degrades polypeptides processively to yield small peptide fragments that are 5 to 10 amino acids long. Binds to DNA in a double-stranded, site-specific manner. In Solibacter usitatus (strain Ellin6076), this protein is Lon protease.